Here is a 197-residue protein sequence, read N- to C-terminus: Proteasome subunit beta 1 (197 aa).

Positions 1–6 (MNRKTG) are cleaved as a propeptide — removed in mature form; by autocatalysis. Residue Thr7 is the Nucleophile of the active site.

The protein belongs to the peptidase T1B family. As to quaternary structure, the 20S proteasome core is composed of 14 alpha and 14 beta subunits that assemble into four stacked heptameric rings, resulting in a barrel-shaped structure. The two inner rings, each composed of seven catalytic beta subunits, are sandwiched by two outer rings, each composed of seven alpha subunits. The catalytic chamber with the active sites is on the inside of the barrel. Has a gated structure, the ends of the cylinder being occluded by the N-termini of the alpha-subunits. Is capped at one or both ends by the proteasome regulatory ATPase, PAN.

The protein resides in the cytoplasm. The catalysed reaction is Cleavage of peptide bonds with very broad specificity.. With respect to regulation, the formation of the proteasomal ATPase PAN-20S proteasome complex, via the docking of the C-termini of PAN into the intersubunit pockets in the alpha-rings, triggers opening of the gate for substrate entry. Interconversion between the open-gate and close-gate conformations leads to a dynamic regulation of the 20S proteasome proteolysis activity. Component of the proteasome core, a large protease complex with broad specificity involved in protein degradation. In Pyrococcus horikoshii (strain ATCC 700860 / DSM 12428 / JCM 9974 / NBRC 100139 / OT-3), this protein is Proteasome subunit beta 1.